The following is a 253-amino-acid chain: Triosephosphate isomerase (253 aa).

Substrate is bound at residue 9–11 (NWK). The Electrophile role is filled by His-96. Glu-169 serves as the catalytic Proton acceptor. Substrate-binding positions include Gly-175, Ser-215, and 236 to 237 (GG).

This sequence belongs to the triosephosphate isomerase family. Homodimer.

The protein localises to the cytoplasm. The catalysed reaction is D-glyceraldehyde 3-phosphate = dihydroxyacetone phosphate. It functions in the pathway carbohydrate biosynthesis; gluconeogenesis. The protein operates within carbohydrate degradation; glycolysis; D-glyceraldehyde 3-phosphate from glycerone phosphate: step 1/1. Its function is as follows. Involved in the gluconeogenesis. Catalyzes stereospecifically the conversion of dihydroxyacetone phosphate (DHAP) to D-glyceraldehyde-3-phosphate (G3P). This Borreliella burgdorferi (strain ZS7) (Borrelia burgdorferi) protein is Triosephosphate isomerase.